The chain runs to 85 residues: Beta-insect depressant toxin Lqh-dprIT3h (85 aa).

The signal sequence occupies residues 1–21 (MKLLLLLTISASMLIEGLVNA). The 61-residue stretch at 22–82 (DGYIRGGDGC…EWDYETDTCG (61 aa)) folds into the LCN-type CS-alpha/beta domain. 4 cysteine pairs are disulfide-bonded: Cys-31-Cys-81, Cys-35-Cys-56, Cys-42-Cys-63, and Cys-46-Cys-65. Residue Gly-82 is modified to Glycine amide.

Belongs to the long (4 C-C) scorpion toxin superfamily. Sodium channel inhibitor family. Beta subfamily. In terms of tissue distribution, expressed by the venom gland.

Its subcellular location is the secreted. Depressant insect beta-toxins cause a transient contraction paralysis followed by a slow flaccid paralysis. They bind voltage-independently at site-4 of sodium channels (Nav) and block action potentials, primarily by depolarizing the axonal membrane and suppressing the sodium current. This depressant toxin is active only on insects. It is found in a relatively small amount in the venom. This chain is Beta-insect depressant toxin Lqh-dprIT3h, found in Leiurus hebraeus (Hebrew deathstalker scorpion).